The chain runs to 123 residues: Ribosome-binding factor A (123 aa).

The protein belongs to the RbfA family. In terms of assembly, monomer. Binds 30S ribosomal subunits, but not 50S ribosomal subunits or 70S ribosomes.

The protein resides in the cytoplasm. Functionally, one of several proteins that assist in the late maturation steps of the functional core of the 30S ribosomal subunit. Associates with free 30S ribosomal subunits (but not with 30S subunits that are part of 70S ribosomes or polysomes). Required for efficient processing of 16S rRNA. May interact with the 5'-terminal helix region of 16S rRNA. This Dechloromonas aromatica (strain RCB) protein is Ribosome-binding factor A.